Reading from the N-terminus, the 458-residue chain is NADH-quinone oxidoreductase subunit N (458 aa).

The next 14 helical transmembrane spans lie at 2 to 22 (LLLLPEITLTLIALLGQCFAL), 30 to 50 (IIYNIVILLCIISIFLTFKYS), 71 to 91 (IILLFTIVSLIIYRDYSILVG), 93 to 113 (TLKFEFITLMLLSIVGIFVAI), 118 to 138 (FLLLFCGMELTALTSYALAGF), 153 to 173 (FILGSLVSCLSLFGISFIYGF), 196 to 216 (LIIGIVLFLSSIFFKLASSPL), 235 to 255 (FTAASKIGMVIVLLNISKLII), 261 to 281 (INYNLIKIIAILSMLFGAFGA), 290 to 310 (LMAYSTILNIGYVLIGVLLHN), 319 to 339 (LYILIYAVVSIGFFTCLIMLF), 361 to 381 (IAALISIVMFSMIGIPPLTGF), 397 to 417 (FTLAYCGIFTSVVAAFYYLKV), and 438 to 458 (LLLINYLVLGFLLFGSFIILF).

Belongs to the complex I subunit 2 family. NDH-1 is composed of 14 different subunits. Subunits NuoA, H, J, K, L, M, N constitute the membrane sector of the complex.

The protein localises to the cell inner membrane. It catalyses the reaction a quinone + NADH + 5 H(+)(in) = a quinol + NAD(+) + 4 H(+)(out). NDH-1 shuttles electrons from NADH, via FMN and iron-sulfur (Fe-S) centers, to quinones in the respiratory chain. The immediate electron acceptor for the enzyme in this species is believed to be ubiquinone. Couples the redox reaction to proton translocation (for every two electrons transferred, four hydrogen ions are translocated across the cytoplasmic membrane), and thus conserves the redox energy in a proton gradient. This Rickettsia prowazekii (strain Madrid E) protein is NADH-quinone oxidoreductase subunit N.